A 109-amino-acid polypeptide reads, in one-letter code: Prothymosin alpha (109 aa).

The interval M1–D109 is disordered. The segment covering S9–P35 has biased composition (basic and acidic residues). Residues E41 to D81 are compositionally biased toward acidic residues. The span at D99–D109 shows a compositional bias: basic and acidic residues.

This sequence belongs to the pro/parathymosin family. Highly expressed in the testis.

It is found in the nucleus. May have role in testicular activity. The protein is Prothymosin alpha of Pelophylax lessonae (Pool frog).